A 434-amino-acid chain; its full sequence is ATP-dependent protease ATPase subunit HslU (434 aa).

ATP-binding positions include Val18, 60–65, Asp247, Glu312, and Arg384; that span reads GVGKTE.

The protein belongs to the ClpX chaperone family. HslU subfamily. A double ring-shaped homohexamer of HslV is capped on each side by a ring-shaped HslU homohexamer. The assembly of the HslU/HslV complex is dependent on binding of ATP.

The protein localises to the cytoplasm. Its function is as follows. ATPase subunit of a proteasome-like degradation complex; this subunit has chaperone activity. The binding of ATP and its subsequent hydrolysis by HslU are essential for unfolding of protein substrates subsequently hydrolyzed by HslV. HslU recognizes the N-terminal part of its protein substrates and unfolds these before they are guided to HslV for hydrolysis. The protein is ATP-dependent protease ATPase subunit HslU of Hyphomonas neptunium (strain ATCC 15444).